The sequence spans 654 residues: Coiled-coil domain-containing protein 30 (654 aa).

The segment at 38–65 is disordered; it reads TLESRRDPNSSLQKEFPQHQDEDQSRAA. Residues 53–62 are compositionally biased toward basic and acidic residues; the sequence is FPQHQDEDQS. Coiled-coil stretches lie at residues 97–244 and 276–559; these read REER…LDNA and KSQQ…QIIR. The tract at residues 614–654 is disordered; that stretch reads AAAIPKSPEPLSRSQDSESGYINVTSLKETHNTQGDQKPEL. A compositionally biased stretch (polar residues) spans 625–654; that stretch reads SRSQDSESGYINVTSLKETHNTQGDQKPEL.

The protein belongs to the prefoldin subunit beta family.

The polypeptide is Coiled-coil domain-containing protein 30 (Ccdc30) (Mus musculus (Mouse)).